Here is a 400-residue protein sequence, read N- to C-terminus: MKNIVVTPMTFEPVYEQDAEIVERKGIGHPDTICDYLAEELSVALSKLYIERFGAIMHHNVDKALLVGGEANPVFGGGEVISPIEIYLVGRALKEYKGVTIPAEELAIEVAREWLKDNIRNLDPDTHVIIKPRIKPGSKDLVDLFLRFQQKGEVPLANDTSFGVGFAPLDDLERIVFETEQLLNSPSFKENHPYVGEDIKVMGVRIKDKVRITIACAFVSKYVENIQDYLEKKEHVRRIVEEMAQGLTQRQVEVFINTADDPERESVYITVTGTSAEQGDDGQVGRGNRVNGLITPYRPMSLEAAAGKNPVSHIGKIYNVVANVIADRVVSEIEEVEEAYCYLVSQIGKPINEPQVCDVKVRTKKDLKSLEEEIKRIAQEELEKMPETWKKFLNREYAVA.

135-140 (KPGSKD) serves as a coordination point for ATP.

It belongs to the AdoMet synthase 2 family. It depends on Mg(2+) as a cofactor.

It catalyses the reaction L-methionine + ATP + H2O = S-adenosyl-L-methionine + phosphate + diphosphate. Its pathway is amino-acid biosynthesis; S-adenosyl-L-methionine biosynthesis; S-adenosyl-L-methionine from L-methionine: step 1/1. In terms of biological role, catalyzes the formation of S-adenosylmethionine from methionine and ATP. The sequence is that of Probable S-adenosylmethionine synthase (mat) from Aquifex aeolicus (strain VF5).